A 583-amino-acid polypeptide reads, in one-letter code: MGGLQKKKYESGSATNYITRNKARKKLSLSLADFRRLCILKGIYPHEPKHKKKVNKGSTAARTYYLLKDIRFLLHEPIVGKFREYKIFVRKLRKAYGKAEWSAVERLKENKPGYKLDHIIKERYPTFIDALRDVDDALSMCFLFSTFARTGKCHVQTIQLCRRLSVEWMNYIISSRSLRKVFLSIKGIYYQAEVLGQTITWIVPYQFAHNHPTDVDYRVMATFTELYTTLLGFVNFRLYQTLNLVYPPKLDGQGEISLKAEFEEDYALESESYTEKLSALSASLARMVASVEEEEAELDHFPTEGEDQEKMEVREKMEQQQSKQKKLFEGLKFFLNREVPRESLAFVIRCFGGEVSWDKSLCIGSTYEATDETITHHIVDRPSMDKQYINRYYIQPQWVYDSVNAKIQLPVEEYFLGVTLPPHLSPFVEETEGDYVPPEKLKLMALQRGEKPQAEEDEEEEGEEEEDDEEDEEDDEQSEDEEEAEEEANLAEMEEKRSQGKSLSVKVTPGKAKAENRARAAEEEKAEEKRLAIMMMKKKEKYLYDKIMFGKKRKVREANKLAAKRKAHDDASKADKKKKKKKC.

The stretch at 275–329 forms a coiled coil; the sequence is EKLSALSASLARMVASVEEEEAELDHFPTEGEDQEKMEVREKMEQQQSKQKKLFE. The region spanning 323-416 is the BRCT domain; sequence KQKKLFEGLK…IQLPVEEYFL (94 aa). Disordered regions lie at residues 448–526 and 558–583; these read RGEK…EEKA and ANKLAAKRKAHDDASKADKKKKKKKC. The span at 455 to 489 shows a compositional bias: acidic residues; it reads EEDEEEEGEEEEDDEEDEEDDEQSEDEEEAEEEAN. Residues 512–526 are compositionally biased toward basic and acidic residues; it reads AKAENRARAAEEEKA.

Belongs to the pescadillo family. As to quaternary structure, component of the PeBoW complex, composed of bop1, pes1 and wdr12. The complex is held together by bop1, which interacts with pes1 via its N-terminal domain and with wdr12 via a high-affinity interaction between the seven-bladed beta-propeller domains of the 2 proteins. The PeBoW complex associates with the 66S pre-ribosome.

Its subcellular location is the nucleus. The protein resides in the nucleolus. It is found in the nucleoplasm. In terms of biological role, component of the PeBoW complex, which is required for maturation of 28S and 5.8S ribosomal RNAs and formation of the 60S ribosome. This Danio rerio (Zebrafish) protein is Pescadillo (pes).